The sequence spans 282 residues: Shikimate dehydrogenase (NADP(+)) (282 aa).

Shikimate-binding positions include 18-20 (SRS) and threonine 65. The active-site Proton acceptor is the lysine 69. Residue glutamate 81 participates in NADP(+) binding. Shikimate-binding residues include asparagine 90 and aspartate 105. Residues 130 to 134 (GAGGA), 154 to 159 (NRTPAR), and methionine 222 each bind NADP(+). Tyrosine 224 provides a ligand contact to shikimate. Glycine 245 contributes to the NADP(+) binding site.

It belongs to the shikimate dehydrogenase family. Homodimer.

It carries out the reaction shikimate + NADP(+) = 3-dehydroshikimate + NADPH + H(+). It participates in metabolic intermediate biosynthesis; chorismate biosynthesis; chorismate from D-erythrose 4-phosphate and phosphoenolpyruvate: step 4/7. In terms of biological role, involved in the biosynthesis of the chorismate, which leads to the biosynthesis of aromatic amino acids. Catalyzes the reversible NADPH linked reduction of 3-dehydroshikimate (DHSA) to yield shikimate (SA). This is Shikimate dehydrogenase (NADP(+)) from Acidovorax sp. (strain JS42).